The primary structure comprises 699 residues: Elongation factor G (699 aa).

One can recognise a tr-type G domain in the interval 8–288 (EDYRNFGIMA…AVCEYLPSPL (281 aa)). GTP is bound by residues 17–24 (AHIDAGKT), 86–90 (DTPGH), and 140–143 (NKMD).

It belongs to the TRAFAC class translation factor GTPase superfamily. Classic translation factor GTPase family. EF-G/EF-2 subfamily.

Its subcellular location is the cytoplasm. Its function is as follows. Catalyzes the GTP-dependent ribosomal translocation step during translation elongation. During this step, the ribosome changes from the pre-translocational (PRE) to the post-translocational (POST) state as the newly formed A-site-bound peptidyl-tRNA and P-site-bound deacylated tRNA move to the P and E sites, respectively. Catalyzes the coordinated movement of the two tRNA molecules, the mRNA and conformational changes in the ribosome. This Allorhizobium ampelinum (strain ATCC BAA-846 / DSM 112012 / S4) (Agrobacterium vitis (strain S4)) protein is Elongation factor G.